The primary structure comprises 790 residues: Pleckstrin homology domain-containing family G member 6 (790 aa).

Positions 63-91 (SGQARGLSPMRLRDPEPEKRHGGHVGAGL) are disordered. Residues 73 to 82 (RLRDPEPEKR) show a composition bias toward basic and acidic residues. The 193-residue stretch at 161–353 (HQQEALWELL…ESFLRHINGQ (193 aa)) folds into the DH domain. Residues 409-509 (QLLLEGPVRV…WLEKTQQAQA (101 aa)) enclose the PH domain. Basic and acidic residues-rich tracts occupy residues 529-538 (LYRDQDRESP) and 625-635 (ELRDIPLRPHP). 3 disordered regions span residues 529 to 677 (LYRD…ASER), 690 to 730 (LRGQ…HTSL), and 748 to 790 (SQRI…ASEV). Over residues 748-762 (SQRIEGAEEPRDSRP) the composition is skewed to basic and acidic residues.

Interacts with MYH10. Interacts with ELMO1 and EZR (in an open conformation). Interacts with CSPP1. As to expression, highest expression in the placenta. Low levels in small intestine, lung, liver, kidney, thymus and heart.

It localises to the cell projection. It is found in the microvillus. Its subcellular location is the cytoplasm. The protein localises to the cytoskeleton. The protein resides in the spindle. It localises to the spindle pole. It is found in the cleavage furrow. In terms of biological role, guanine nucleotide exchange factor activating the small GTPase RHOA, which, in turn, induces myosin filament formation. Also activates RHOG. Does not activate RAC1, or to a much lower extent than RHOA and RHOG. Part of a functional unit, involving PLEKHG6, MYH10 and RHOA, at the cleavage furrow to advance furrow ingression during cytokinesis. In epithelial cells, required for the formation of microvilli and membrane ruffles on the apical pole. Along with EZR, required for normal macropinocytosis. This chain is Pleckstrin homology domain-containing family G member 6 (PLEKHG6), found in Homo sapiens (Human).